A 1291-amino-acid chain; its full sequence is Vigilin 1 (1291 aa).

A compositionally biased stretch (polar residues) spans 1 to 39 (MEHLSNLEQPTTMDSYDFQKLTNDENLQGTESQVPSGSK). 2 disordered regions span residues 1 to 45 (MEHL…STNG) and 70 to 91 (HENAQQGKKQNNSKSFSKKPAI). Positions 73–88 (AQQGKKQNNSKSFSKK) are enriched in low complexity. Ser-115 carries the post-translational modification Phosphoserine. A disordered region spans residues 124 to 148 (TSVAGSDSVSRDKIPFSASSRASST). KH domains follow at residues 166-229 (ILSP…RRQI), 236-328 (RETK…QKDI), 339-405 (TTVR…ALYL), 416-486 (TIPT…NSTI), 575-644 (SKFY…LADL), 658-726 (IVSE…VSEI), 741-798 (SHVE…AARI), 808-883 (DTIL…KQEL), 894-957 (AYTS…IKEI), 967-1040 (LVEK…ETRL), 1050-1114 (QVEE…KEMI), and 1219-1280 (NCIA…KDLI). The segment at 266–303 (TSTRIQIPKRNNTANESSDDAKKPEKEENSAASTLDDL) is disordered. Residues 268–281 (TRIQIPKRNNTANE) show a composition bias toward polar residues. The segment covering 284-294 (DDAKKPEKEEN) has biased composition (basic and acidic residues). The segment at 845 to 865 (PREDDSSNSTGNELMKPTSPD) is disordered. Ser-934 carries the post-translational modification Phosphoserine. At Thr-935 the chain carries Phosphothreonine.

It localises to the endoplasmic reticulum. Its subcellular location is the cytoplasm. Functionally, required for cell survival under thermal stress. The polypeptide is Vigilin 1 (vgl1) (Schizosaccharomyces pombe (strain 972 / ATCC 24843) (Fission yeast)).